The sequence spans 780 residues: MGKKRIYELAKEINVSSKQIIAKAEEKGFPVKNHMSTLGENEERQLRAAFKPQAKTSHEQSAASAQPQRKVQQPRREKSQGTARTQTTAQKPAGKPANQTQRNNNNKNNGQTGNRQHEQQHSGTGRFGGSLNNNTNNSNGRRNSNNSNSRGGRNSRNNRNNRRRNNNNNNRYKKNQRIKDTNQHKGAPERKNKALPEVLVYTDGMNAQDLAKILHRSSAEIVKKLFMLGVMVNQNQSLDKDTIEILADDYGIQAQEKVEVDVTDIDKFFDAEMANKDFEAPRAPVVTIMGHVDHGKTTLLDHLRHSHITDGEAGGITQAIGAYQVHYNDKVITFLDTPGHAAFTEMRARGAEITDITVLVVAADDGVMPQTIEAIHHAKAAGTPIIVAVNKIDKPGANPNHVMEQLTEYELIPEDWGGDTIFVEISAKFGKNIDELLDMILLQSDVLELKANPKQNGVGSVIEARLDQGKGSVATLLVQQGTLHVGDPIVVGNTFGRVRTMVNERGRRIKDATPSTPVEITGLNDVPEAGDRFVVFDDEKTARAAGEERAKEALVKERRNTSHVTLDNLFDSLKEGEMKEVDVIIKADVQGSVEALAGSLKKIDVSGVRVNIIHSAVGAINESDVTLAEASDAIIIGFNVRPTPQARAQADSDKVDIRLHNVIYNAIDEIETAMKGLLEPTYEEEIIGEVEVKDIFHASKVGTIVGGMVTEGYVTSESDVRLIRDGVVIYEGKLGSLKRFKDDVKQVKMGYELGLTIENYNDVKVGDVIEAYVMKEVPVK.

The segment at 24–194 is disordered; it reads AEEKGFPVKN…KGAPERKNKA (171 aa). Composition is skewed to polar residues over residues 59–71 and 80–90; these read EQSA…QRKV and QGTARTQTTAQ. 2 stretches are compositionally biased toward low complexity: residues 98-114 and 132-158; these read NQTQ…QTGN and NNNT…SRNN. Positions 159 to 176 are enriched in basic residues; that stretch reads RNNRRRNNNNNNRYKKNQ. The span at 177 to 194 shows a compositional bias: basic and acidic residues; that stretch reads RIKDTNQHKGAPERKNKA. The region spanning 281–450 is the tr-type G domain; it reads PRAPVVTIMG…LLQSDVLELK (170 aa). Residues 290-297 are G1; it reads GHVDHGKT. 290 to 297 lines the GTP pocket; the sequence is GHVDHGKT. Positions 315–319 are G2; it reads GITQA. The tract at residues 336-339 is G3; the sequence is DTPG. Residues 336–340 and 390–393 each bind GTP; these read DTPGH and NKID. A G4 region spans residues 390–393; the sequence is NKID. The G5 stretch occupies residues 426–428; the sequence is SAK.

Belongs to the TRAFAC class translation factor GTPase superfamily. Classic translation factor GTPase family. IF-2 subfamily.

It is found in the cytoplasm. Functionally, one of the essential components for the initiation of protein synthesis. Protects formylmethionyl-tRNA from spontaneous hydrolysis and promotes its binding to the 30S ribosomal subunits. Also involved in the hydrolysis of GTP during the formation of the 70S ribosomal complex. In Levilactobacillus brevis (strain ATCC 367 / BCRC 12310 / CIP 105137 / JCM 1170 / LMG 11437 / NCIMB 947 / NCTC 947) (Lactobacillus brevis), this protein is Translation initiation factor IF-2.